A 159-amino-acid chain; its full sequence is Putative 4-hydroxy-4-methyl-2-oxoglutarate aldolase (159 aa).

Substrate-binding positions include 78 to 81 (GDVI) and arginine 100. Residue aspartate 101 participates in a divalent metal cation binding.

It belongs to the class II aldolase/RraA-like family. As to quaternary structure, homotrimer. The cofactor is a divalent metal cation.

It catalyses the reaction 4-hydroxy-4-methyl-2-oxoglutarate = 2 pyruvate. The enzyme catalyses oxaloacetate + H(+) = pyruvate + CO2. Functionally, catalyzes the aldol cleavage of 4-hydroxy-4-methyl-2-oxoglutarate (HMG) into 2 molecules of pyruvate. Also contains a secondary oxaloacetate (OAA) decarboxylase activity due to the common pyruvate enolate transition state formed following C-C bond cleavage in the retro-aldol and decarboxylation reactions. This Mycobacterium sp. (strain KMS) protein is Putative 4-hydroxy-4-methyl-2-oxoglutarate aldolase.